We begin with the raw amino-acid sequence, 221 residues long: Endo-1,4-beta-xylanase 11A (221 aa).

An N-terminal signal peptide occupies residues 1–18 (MKFATVLAFATAAGAAFA). The GH11 domain occupies 23-220 (SSETTEAGQL…GTGSASMSVS (198 aa)). The active-site Nucleophile is glutamate 111. Asparagine 117 carries N-linked (GlcNAc...) asparagine glycosylation. The active-site Proton donor is glutamate 207.

The protein belongs to the glycosyl hydrolase 11 (cellulase G) family.

It is found in the secreted. It carries out the reaction Endohydrolysis of (1-&gt;4)-beta-D-xylosidic linkages in xylans.. It participates in glycan degradation; xylan degradation. Endo-1,4-beta-xylanase involved in the hydrolysis of xylan, a major structural heterogeneous polysaccharide found in plant biomass representing the second most abundant polysaccharide in the biosphere, after cellulose. This Mycosarcoma maydis (Corn smut fungus) protein is Endo-1,4-beta-xylanase 11A (XYN11A).